Here is a 287-residue protein sequence, read N- to C-terminus: ATP synthase gamma chain (287 aa).

It belongs to the ATPase gamma chain family. F-type ATPases have 2 components, CF(1) - the catalytic core - and CF(0) - the membrane proton channel. CF(1) has five subunits: alpha(3), beta(3), gamma(1), delta(1), epsilon(1). CF(0) has three main subunits: a, b and c.

It localises to the cell inner membrane. In terms of biological role, produces ATP from ADP in the presence of a proton gradient across the membrane. The gamma chain is believed to be important in regulating ATPase activity and the flow of protons through the CF(0) complex. In Salmonella gallinarum (strain 287/91 / NCTC 13346), this protein is ATP synthase gamma chain.